The chain runs to 318 residues: Mitochondrial coenzyme A transporter SLC25A42 (318 aa).

Solcar repeat units follow at residues 31–117 (RQVL…YKRI), 129–214 (LPPW…LKSL), and 224–312 (PYPF…MQIL). The next 6 helical transmembrane spans lie at 33-53 (VLSSLLSGALAGALAKTAVAP), 89-109 (LWRGNSATMVRVIPYAAIQFS), 135-155 (LLAGALAGTTAASLTYPLDLV), 186-206 (LYFGFTPTVLGVIPYAGLSFF), 230-250 (MVFGACAGLIGQSASYPLDVV), and 293-313 (LKGPIAVGISFTTFDLMQILL).

Belongs to the mitochondrial carrier (TC 2.A.29) family. As to expression, widely expressed. Highly expressed in adipose, followed by hypothalamus and brain coronal sections containing corpus callosum, fornix, thalamus, hypothalamus, optic chiasm, pons, midbrain, and cerebellum.

Its subcellular location is the mitochondrion inner membrane. It catalyses the reaction ADP(out) + CoA(in) = ADP(in) + CoA(out). It carries out the reaction 3'-dephospho-CoA(in) + ADP(out) = 3'-dephospho-CoA(out) + ADP(in). The enzyme catalyses adenosine 3',5'-bisphosphate(in) + ADP(out) = adenosine 3',5'-bisphosphate(out) + ADP(in). The catalysed reaction is AMP(in) + ADP(out) = AMP(out) + ADP(in). It catalyses the reaction dADP(in) + ADP(out) = dADP(out) + ADP(in). It carries out the reaction ADP(in) + ATP(out) = ADP(out) + ATP(in). Functionally, mitochondrial carrier mediating the transport of coenzyme A (CoA) in mitochondria in exchange for intramitochondrial (deoxy)adenine nucleotides and adenosine 3',5'-diphosphate. The chain is Mitochondrial coenzyme A transporter SLC25A42 (Slc25a42) from Rattus norvegicus (Rat).